The sequence spans 98 residues: Small ribosomal subunit protein uS19 (98 aa).

The segment at 77-98 is disordered; sequence TRTFRGHAGGKAEKGGSAPRKK.

The protein belongs to the universal ribosomal protein uS19 family.

Its function is as follows. Protein S19 forms a complex with S13 that binds strongly to the 16S ribosomal RNA. The protein is Small ribosomal subunit protein uS19 of Chlorobium limicola (strain DSM 245 / NBRC 103803 / 6330).